Consider the following 418-residue polypeptide: Pigment epithelium-derived factor (418 aa).

The N-terminal stretch at 1 to 19 is a signal peptide; that stretch reads MQALVLLLCIGALLGHSSC. Gln20 bears the Pyrrolidone carboxylic acid mark. The tract at residues 20–39 is disordered; the sequence is QNPASPPEEGSPDPDSTGAL. Phosphoserine; by CK2 is present on residues Ser24 and Ser114. Phosphoserine; by PKA is present on Ser227. A glycan (N-linked (GlcNAc...) (complex) asparagine) is linked at Asn285. An O-glycosylated at one site region spans residues 371–383; the sequence is TTPSPGLQPAHLT.

It belongs to the serpin family. In terms of assembly, interacts with PNPLA2; this interaction stimulates the phospholipase A2 activity of PNPLA2. Post-translationally, the N-terminus is blocked. Extracellular phosphorylation enhances antiangiogenic activity. In terms of processing, N- and O-glycosylated. O-glycosylated with a core 1 or possibly core 8 glycan. Retinal pigment epithelial cells and blood plasma.

It is found in the secreted. It localises to the melanosome. In terms of biological role, neurotrophic protein; induces extensive neuronal differentiation in retinoblastoma cells. Potent inhibitor of angiogenesis. As it does not undergo the S (stressed) to R (relaxed) conformational transition characteristic of active serpins, it exhibits no serine protease inhibitory activity. This is Pigment epithelium-derived factor (SERPINF1) from Homo sapiens (Human).